A 145-amino-acid polypeptide reads, in one-letter code: D-aminoacyl-tRNA deacylase (145 aa).

Residues 137-138 (GP) carry the Gly-cisPro motif, important for rejection of L-amino acids motif.

This sequence belongs to the DTD family. As to quaternary structure, homodimer.

It is found in the cytoplasm. The enzyme catalyses glycyl-tRNA(Ala) + H2O = tRNA(Ala) + glycine + H(+). It carries out the reaction a D-aminoacyl-tRNA + H2O = a tRNA + a D-alpha-amino acid + H(+). In terms of biological role, an aminoacyl-tRNA editing enzyme that deacylates mischarged D-aminoacyl-tRNAs. Also deacylates mischarged glycyl-tRNA(Ala), protecting cells against glycine mischarging by AlaRS. Acts via tRNA-based rather than protein-based catalysis; rejects L-amino acids rather than detecting D-amino acids in the active site. By recycling D-aminoacyl-tRNA to D-amino acids and free tRNA molecules, this enzyme counteracts the toxicity associated with the formation of D-aminoacyl-tRNA entities in vivo and helps enforce protein L-homochirality. The sequence is that of D-aminoacyl-tRNA deacylase from Shewanella frigidimarina (strain NCIMB 400).